The sequence spans 251 residues: Protein crossbronx (251 aa).

A UBC core domain is found at 20–176 (QQEYKILAEY…TRENIRESLA (157 aa)). Residues 211 to 251 (QSKHLESQSQQSNNGGNGGGGGAATGLSWVKEGEFKPLSVE) are disordered. Positions 225–234 (GGNGGGGGAA) are enriched in gly residues.

This sequence belongs to the ubiquitin-conjugating enzyme family. FTS subfamily.

This is Protein crossbronx (cbx) from Drosophila willistoni (Fruit fly).